Here is a 140-residue protein sequence, read N- to C-terminus: Oleosin Cor a 13 (140 aa).

2 helical membrane-spanning segments follow: residues 31–51 and 75–95; these read GSLL…LTLA and GFLA…WIYR.

The protein belongs to the oleosin family. In terms of tissue distribution, expressed in seeds.

Its subcellular location is the lipid droplet. It localises to the membrane. Functionally, may have a structural role to stabilize the lipid body during desiccation of the seed by preventing coalescence of the oil. Probably interacts with both lipid and phospholipid moieties of lipid bodies. May also provide recognition signals for specific lipase anchorage in lipolysis during seedling growth. In Corylus avellana (European hazel), this protein is Oleosin Cor a 13.